We begin with the raw amino-acid sequence, 314 residues long: Aspartate carbamoyltransferase catalytic subunit (314 aa).

Positions 64 and 65 each coordinate carbamoyl phosphate. Lys-92 is a binding site for L-aspartate. Carbamoyl phosphate contacts are provided by Arg-114, His-142, and Gln-145. L-aspartate-binding residues include Arg-175 and Arg-230. The carbamoyl phosphate site is built by Gly-271 and Pro-272.

It belongs to the aspartate/ornithine carbamoyltransferase superfamily. ATCase family. As to quaternary structure, heterododecamer (2C3:3R2) of six catalytic PyrB chains organized as two trimers (C3), and six regulatory PyrI chains organized as three dimers (R2).

It catalyses the reaction carbamoyl phosphate + L-aspartate = N-carbamoyl-L-aspartate + phosphate + H(+). The protein operates within pyrimidine metabolism; UMP biosynthesis via de novo pathway; (S)-dihydroorotate from bicarbonate: step 2/3. Catalyzes the condensation of carbamoyl phosphate and aspartate to form carbamoyl aspartate and inorganic phosphate, the committed step in the de novo pyrimidine nucleotide biosynthesis pathway. The chain is Aspartate carbamoyltransferase catalytic subunit from Deinococcus radiodurans (strain ATCC 13939 / DSM 20539 / JCM 16871 / CCUG 27074 / LMG 4051 / NBRC 15346 / NCIMB 9279 / VKM B-1422 / R1).